Reading from the N-terminus, the 129-residue chain is Phosphoribosyl-AMP cyclohydrolase (129 aa).

Residue D85 coordinates Mg(2+). C86 lines the Zn(2+) pocket. D87 and D89 together coordinate Mg(2+). 2 residues coordinate Zn(2+): C102 and C109.

This sequence belongs to the PRA-CH family. In terms of assembly, homodimer. Requires Mg(2+) as cofactor. The cofactor is Zn(2+).

It is found in the cytoplasm. It carries out the reaction 1-(5-phospho-beta-D-ribosyl)-5'-AMP + H2O = 1-(5-phospho-beta-D-ribosyl)-5-[(5-phospho-beta-D-ribosylamino)methylideneamino]imidazole-4-carboxamide. It participates in amino-acid biosynthesis; L-histidine biosynthesis; L-histidine from 5-phospho-alpha-D-ribose 1-diphosphate: step 3/9. Its function is as follows. Catalyzes the hydrolysis of the adenine ring of phosphoribosyl-AMP. The chain is Phosphoribosyl-AMP cyclohydrolase from Methanococcus maripaludis (strain C6 / ATCC BAA-1332).